The sequence spans 158 residues: NAD(P)H-quinone oxidoreductase subunit J, chloroplastic (158 aa).

It belongs to the complex I 30 kDa subunit family. NDH is composed of at least 16 different subunits, 5 of which are encoded in the nucleus.

It is found in the plastid. The protein resides in the chloroplast thylakoid membrane. The enzyme catalyses a plastoquinone + NADH + (n+1) H(+)(in) = a plastoquinol + NAD(+) + n H(+)(out). The catalysed reaction is a plastoquinone + NADPH + (n+1) H(+)(in) = a plastoquinol + NADP(+) + n H(+)(out). In terms of biological role, NDH shuttles electrons from NAD(P)H:plastoquinone, via FMN and iron-sulfur (Fe-S) centers, to quinones in the photosynthetic chain and possibly in a chloroplast respiratory chain. The immediate electron acceptor for the enzyme in this species is believed to be plastoquinone. Couples the redox reaction to proton translocation, and thus conserves the redox energy in a proton gradient. This Draba nemorosa (Woodland whitlowgrass) protein is NAD(P)H-quinone oxidoreductase subunit J, chloroplastic.